A 351-amino-acid polypeptide reads, in one-letter code: Nicotinate-nucleotide--dimethylbenzimidazole phosphoribosyltransferase (351 aa).

E318 acts as the Proton acceptor in catalysis.

It belongs to the CobT family.

It carries out the reaction 5,6-dimethylbenzimidazole + nicotinate beta-D-ribonucleotide = alpha-ribazole 5'-phosphate + nicotinate + H(+). It participates in nucleoside biosynthesis; alpha-ribazole biosynthesis; alpha-ribazole from 5,6-dimethylbenzimidazole: step 1/2. Functionally, catalyzes the synthesis of alpha-ribazole-5'-phosphate from nicotinate mononucleotide (NAMN) and 5,6-dimethylbenzimidazole (DMB). This is Nicotinate-nucleotide--dimethylbenzimidazole phosphoribosyltransferase from Shewanella frigidimarina (strain NCIMB 400).